The chain runs to 232 residues: Uracil phosphoribosyltransferase (232 aa).

Residue 38 to 42 (KGLVK) participates in GTP binding. 5-phospho-alpha-D-ribose 1-diphosphate-binding positions include Arg-87, Arg-112, and 140–148 (DPMIATGST). Residues Ile-204 and 209-211 (GDA) contribute to the uracil site. Residue Asp-210 participates in 5-phospho-alpha-D-ribose 1-diphosphate binding.

It belongs to the UPRTase family. Requires Mg(2+) as cofactor.

The catalysed reaction is UMP + diphosphate = 5-phospho-alpha-D-ribose 1-diphosphate + uracil. Its pathway is pyrimidine metabolism; UMP biosynthesis via salvage pathway; UMP from uracil: step 1/1. Its activity is regulated as follows. Allosterically activated by GTP. Functionally, catalyzes the conversion of uracil and 5-phospho-alpha-D-ribose 1-diphosphate (PRPP) to UMP and diphosphate. This chain is Uracil phosphoribosyltransferase, found in Thermococcus sibiricus (strain DSM 12597 / MM 739).